The chain runs to 205 residues: Fibrillarin-like rRNA/tRNA 2'-O-methyltransferase (205 aa).

Residues 60-61 (ST), 76-77 (EF), 101-102 (DA), and 121-124 (DIAQ) contribute to the S-adenosyl-L-methionine site.

Belongs to the methyltransferase superfamily. Fibrillarin family. In terms of assembly, interacts with nop5. Component of box C/D small ribonucleoprotein (sRNP) particles that contain rpl7ae, FlpA and nop5, plus a guide RNA.

Its function is as follows. Involved in pre-rRNA and tRNA processing. Utilizes the methyl donor S-adenosyl-L-methionine to catalyze the site-specific 2'-hydroxyl methylation of ribose moieties in rRNA and tRNA. Site specificity is provided by a guide RNA that base pairs with the substrate. Methylation occurs at a characteristic distance from the sequence involved in base pairing with the guide RNA. The sequence is that of Fibrillarin-like rRNA/tRNA 2'-O-methyltransferase from Methanospirillum hungatei JF-1 (strain ATCC 27890 / DSM 864 / NBRC 100397 / JF-1).